The chain runs to 646 residues: 1-deoxy-D-xylulose-5-phosphate synthase (646 aa).

Thiamine diphosphate is bound by residues His86 and 127–129 (AHS). Asp158 serves as a coordination point for Mg(2+). Residues 159 to 160 (GA), Asn188, Tyr295, and Glu377 each bind thiamine diphosphate. Asn188 is a Mg(2+) binding site.

This sequence belongs to the transketolase family. DXPS subfamily. In terms of assembly, homodimer. Mg(2+) serves as cofactor. Thiamine diphosphate is required as a cofactor.

It carries out the reaction D-glyceraldehyde 3-phosphate + pyruvate + H(+) = 1-deoxy-D-xylulose 5-phosphate + CO2. It functions in the pathway metabolic intermediate biosynthesis; 1-deoxy-D-xylulose 5-phosphate biosynthesis; 1-deoxy-D-xylulose 5-phosphate from D-glyceraldehyde 3-phosphate and pyruvate: step 1/1. Catalyzes the acyloin condensation reaction between C atoms 2 and 3 of pyruvate and glyceraldehyde 3-phosphate to yield 1-deoxy-D-xylulose-5-phosphate (DXP). In Burkholderia cenocepacia (strain HI2424), this protein is 1-deoxy-D-xylulose-5-phosphate synthase.